Reading from the N-terminus, the 80-residue chain is Small ribosomal subunit protein bS16 (80 aa).

The protein belongs to the bacterial ribosomal protein bS16 family.

This is Small ribosomal subunit protein bS16 from Nitrosococcus oceani (strain ATCC 19707 / BCRC 17464 / JCM 30415 / NCIMB 11848 / C-107).